Reading from the N-terminus, the 287-residue chain is ATP synthase gamma chain (287 aa).

It belongs to the ATPase gamma chain family. In terms of assembly, F-type ATPases have 2 components, CF(1) - the catalytic core - and CF(0) - the membrane proton channel. CF(1) has five subunits: alpha(3), beta(3), gamma(1), delta(1), epsilon(1). CF(0) has three main subunits: a, b and c.

It is found in the cell membrane. Functionally, produces ATP from ADP in the presence of a proton gradient across the membrane. The gamma chain is believed to be important in regulating ATPase activity and the flow of protons through the CF(0) complex. This is ATP synthase gamma chain from Halothermothrix orenii (strain H 168 / OCM 544 / DSM 9562).